Reading from the N-terminus, the 159-residue chain is NAD(P)H-quinone oxidoreductase subunit N (159 aa).

This sequence belongs to the complex I NdhN subunit family. In terms of assembly, NDH-1 can be composed of about 15 different subunits; different subcomplexes with different compositions have been identified which probably have different functions.

The protein localises to the cell inner membrane. The catalysed reaction is a plastoquinone + NADH + (n+1) H(+)(in) = a plastoquinol + NAD(+) + n H(+)(out). The enzyme catalyses a plastoquinone + NADPH + (n+1) H(+)(in) = a plastoquinol + NADP(+) + n H(+)(out). In terms of biological role, NDH-1 shuttles electrons from an unknown electron donor, via FMN and iron-sulfur (Fe-S) centers, to quinones in the respiratory and/or the photosynthetic chain. The immediate electron acceptor for the enzyme in this species is believed to be plastoquinone. Couples the redox reaction to proton translocation, and thus conserves the redox energy in a proton gradient. Cyanobacterial NDH-1 also plays a role in inorganic carbon-concentration. The chain is NAD(P)H-quinone oxidoreductase subunit N from Gloeobacter violaceus (strain ATCC 29082 / PCC 7421).